A 607-amino-acid polypeptide reads, in one-letter code: MPRKKPFSVKQKKKQLQDKRERKRGLQDGLRSSSNSRSGSRERREEQTDTSDGESVTHHIRRLNQQPSQGLGPRGYDPNRYRLHFERDSREEVERRKRAAREQVLQPVSAELLELDIREVYQPGSVLDFPRRPPWSYEMSKEQLMSQEERSFQDYLGKIHGAYSSEKLSYFEHNLETWRQLWRVLEMSDIVLLITDIRHPVVNFPPALYEYVTGELGLALVLVLNKVDLAPPALVVAWKHYFHQHYPQLHVVLFTSFPRDPRTPQDPSSVLKKSRRRGRGWTRALGPEQLLRACEAITVGKVDLSSWREKIARDVAGATWGNGSGEEEEEEDGPAVLVEQQTDSAMEPTGPTQERYKDGVVTIGCVGFPNVGKSSLINGLVGRKVVSVSRTPGHTRYFQTYFLTPSVKLCDCPGLIFPSLLPRQLQVLAGIYPIAQIQEPYTAVGYLASRIPVQALLHLRHPEAEDPSAEHPWCAWDICEAWAEKRGYKTAKAARNDVYRAANSLLRLAVDGRLSLCFHPPGYSEQKGTWESHPETTELVVLQGRVGPAGDEEEEEEEELSSSCEEEGEEDRDADEEGEGDEETPTSAPGSSLAGRNPYALLGEDEC.

Positions 1 to 14 are enriched in basic residues; it reads MPRKKPFSVKQKKK. A disordered region spans residues 1–81; that stretch reads MPRKKPFSVK…GPRGYDPNRY (81 aa). Residues 15–26 are compositionally biased toward basic and acidic residues; that stretch reads QLQDKRERKRGL. Phosphoserine occurs at positions 32, 33, and 34. Threonine 48 and threonine 50 each carry phosphothreonine. 2 positions are modified to phosphoserine: serine 51 and serine 68. Residues 178 to 418 enclose the CP-type G domain; the sequence is WRQLWRVLEM…LCDCPGLIFP (241 aa). Position 225-228 (225-228) interacts with GTP; the sequence is NKVD. Serine 324 carries the post-translational modification Phosphoserine. Residues 367–374 and 411–415 contribute to the GTP site; these read GFPNVGKS and DCPGL. The disordered stretch occupies residues 547-607; the sequence is GPAGDEEEEE…PYALLGEDEC (61 aa). The segment covering 550–584 has biased composition (acidic residues); that stretch reads GDEEEEEEEELSSSCEEEGEEDRDADEEGEGDEET. 3 positions are modified to phosphoserine: serine 561, serine 562, and serine 563.

The protein belongs to the TRAFAC class YlqF/YawG GTPase family.

Functionally, possible regulatory or functional link with the histocompatibility cluster. In Homo sapiens (Human), this protein is Guanine nucleotide-binding protein-like 1 (GNL1).